Consider the following 248-residue polypeptide: Large ribosomal subunit protein uL30A (248 aa).

Positions 1–44 (MSQKKQKIQVEQKVPENVAKKTQRDSKLRDAVAKRRTERLAANK) are disordered. Positions 8–41 (IQVEQKVPENVAKKTQRDSKLRDAVAKRRTERLA) are enriched in basic and acidic residues.

It belongs to the universal ribosomal protein uL30 family.

Its function is as follows. Binds to G-rich structures in 28S rRNA and in mRNAs. Plays a regulatory role in the translation apparatus; inhibits cell-free translation of mRNAs. The polypeptide is Large ribosomal subunit protein uL30A (Rpl7-1) (Paramecium tetraurelia).